Consider the following 396-residue polypeptide: E3 ubiquitin-protein transferase MAEA (396 aa).

The tract at residues 1–124 is extracellular and involved in cell to cell contact; sequence MAVQESAAQL…AAASVWKRKR (124 aa). The residue at position 28 (Thr-28) is a Phosphothreonine. Positions 121-153 constitute a LisH domain; sequence KRKRMDRMMVEHLLRCGYYNTAVKLARQSGIED. Residues 159-216 enclose the CTLH domain; that stretch reads MFLTAKEVEESLERRETATCLAWCHDNKSRLRKMKSCLEFSLRIQEFIELIRQNKRLD. The RING-Gid-type zinc-finger motif lies at 314–381; it reads CPVCSRSLNK…QDDKVVCPRT (68 aa).

In terms of assembly, identified in the CTLH complex that contains GID4, RANBP9 and/or RANBP10, MKLN1, MAEA, RMND5A (or alternatively its paralog RMND5B), GID8, ARMC8, WDR26 and YPEL5. Within this complex, MAEA, RMND5A (or alternatively its paralog RMND5B), GID8, WDR26, and RANBP9 and/or RANBP10 form the catalytic core, while GID4, MKLN1, ARMC8 and YPEL5 have ancillary roles. Interacts with F-actin. Autoubiquitinated as component of the CTLH E3 ubiquitin-protein ligase complex (in vitro).

It localises to the cytoplasm. The protein localises to the nucleus. It is found in the nucleoplasm. Its subcellular location is the nucleus matrix. The protein resides in the cell membrane. It localises to the cytoskeleton. The catalysed reaction is S-ubiquitinyl-[E2 ubiquitin-conjugating enzyme]-L-cysteine + [acceptor protein]-L-lysine = [E2 ubiquitin-conjugating enzyme]-L-cysteine + N(6)-ubiquitinyl-[acceptor protein]-L-lysine.. Its function is as follows. Core component of the CTLH E3 ubiquitin-protein ligase complex that selectively accepts ubiquitin from UBE2H and mediates ubiquitination and subsequent proteasomal degradation of the transcription factor HBP1. MAEA and RMND5A are both required for catalytic activity of the CTLH E3 ubiquitin-protein ligase complex. MAEA is required for normal cell proliferation. The CTLH E3 ubiquitin-protein ligase complex is not required for the degradation of enzymes involved in gluconeogenesis, such as FBP1. Plays a role in erythroblast enucleation during erythrocyte maturation and in the development of mature macrophages. Mediates the attachment of erythroid cell to mature macrophages; this MAEA-mediated contact inhibits erythroid cell apoptosis. Participates in erythroblastic island formation, which is the functional unit of definitive erythropoiesis. Associates with F-actin to regulate actin distribution in erythroblasts and macrophages. May contribute to nuclear architecture and cells division events. The chain is E3 ubiquitin-protein transferase MAEA (MAEA) from Pongo abelii (Sumatran orangutan).